Here is a 481-residue protein sequence, read N- to C-terminus: Flavonol 3-O-glucosyltransferase UGT71C1 (481 aa).

Residue His19 is the Proton acceptor of the active site. Position 19 (His19) interacts with an anthocyanidin. Catalysis depends on Asp131, which acts as the Charge relay. 8 residues coordinate UDP-alpha-D-glucose: Thr153, Ala352, Gln354, His369, Trp372, Asn373, Ser374, and Glu377. Ala392 is a binding site for an anthocyanidin. The UDP-alpha-D-glucose site is built by Glu393 and Gln394.

It belongs to the UDP-glycosyltransferase family.

The enzyme catalyses a flavonol + UDP-alpha-D-glucose = a flavonol 3-O-beta-D-glucoside + UDP + H(+). The catalysed reaction is a 7-O-hydroxy-flavonol + UDP-alpha-D-glucose = a flavonol 7-O-beta-D-glucoside + UDP + H(+). Possesses quercetin 7-O-glucosyltransferase and 3'-O-glucosyltransferase activities in vitro. Also active in vitro on benzoates and benzoate derivatives. Glucosylates other secondary metabolites in vitro like trans-resveratrol, curcumin, vanillin and etoposide. This is Flavonol 3-O-glucosyltransferase UGT71C1 from Arabidopsis thaliana (Mouse-ear cress).